The following is a 179-amino-acid chain: ATP synthase subunit delta (179 aa).

It belongs to the ATPase delta chain family. In terms of assembly, F-type ATPases have 2 components, F(1) - the catalytic core - and F(0) - the membrane proton channel. F(1) has five subunits: alpha(3), beta(3), gamma(1), delta(1), epsilon(1). F(0) has three main subunits: a(1), b(2) and c(10-14). The alpha and beta chains form an alternating ring which encloses part of the gamma chain. F(1) is attached to F(0) by a central stalk formed by the gamma and epsilon chains, while a peripheral stalk is formed by the delta and b chains.

The protein localises to the cell inner membrane. In terms of biological role, f(1)F(0) ATP synthase produces ATP from ADP in the presence of a proton or sodium gradient. F-type ATPases consist of two structural domains, F(1) containing the extramembraneous catalytic core and F(0) containing the membrane proton channel, linked together by a central stalk and a peripheral stalk. During catalysis, ATP synthesis in the catalytic domain of F(1) is coupled via a rotary mechanism of the central stalk subunits to proton translocation. This protein is part of the stalk that links CF(0) to CF(1). It either transmits conformational changes from CF(0) to CF(1) or is implicated in proton conduction. This is ATP synthase subunit delta from Polaromonas naphthalenivorans (strain CJ2).